Reading from the N-terminus, the 697-residue chain is Lebercilin (697 aa).

The segment at 1 to 90 is disordered; that stretch reads MGERAGSPGT…VGFRSQSLNR (90 aa). A phosphoserine mark is found at serine 7 and serine 45. Positions 32 to 45 are enriched in low complexity; the sequence is SSGRSSLVSSSPAS. Coiled coils occupy residues 103 to 297 and 389 to 485; these read RILS…IKNI and EEKF…RNLK. Disordered regions lie at residues 412–432, 522–548, and 606–697; these read WEREELDKKQKEKASLLEREE, HHLQDISFSTPKGEGQNSGNVRSPASP, and EQLF…VALR. A compositionally biased stretch (basic and acidic residues) spans 416-432; that stretch reads ELDKKQKEKASLLEREE. Positions 527–547 are enriched in polar residues; that stretch reads ISFSTPKGEGQNSGNVRSPAS. Residues 612-626 show a composition bias toward low complexity; that stretch reads SGSSTISSKSSDPNS. Residues 686-697 show a composition bias toward acidic residues; sequence SVEDEIEEVALR.

Belongs to the LCA5 family. As to quaternary structure, interacts with NINL. Interacts with OFD1. Interacts with FAM161A. Interacts with components of the IFT complex B. Widely expressed.

Its subcellular location is the cytoplasm. The protein resides in the cytoskeleton. It is found in the cilium axoneme. It localises to the cilium basal body. The protein localises to the microtubule organizing center. Its subcellular location is the centrosome. The protein resides in the cell projection. It is found in the cilium. Its function is as follows. Involved in intraflagellar protein (IFT) transport in photoreceptor cilia. This chain is Lebercilin (LCA5), found in Homo sapiens (Human).